Consider the following 354-residue polypeptide: Type II secretion system protein K (354 aa).

Residues 1–7 (MSRRQRG) constitute a propeptide, leader sequence. A helical transmembrane segment spans residues 8 to 28 (VALLIVMLMLSLMVTIAASIT). Residues 29 to 354 (ERSGKAWQRT…QYGGYRTVNP (326 aa)) lie on the Periplasmic side of the membrane. A disordered region spans residues 114–151 (NVTPNNASGNNTSGNNNAANGSSGNGNSPQPPKVGTSE). Positions 118-141 (NNASGNNTSGNNNAANGSSGNGNS) are enriched in low complexity.

Belongs to the GSP K family. As to quaternary structure, type II secretion is composed of four main components: the outer membrane complex, the inner membrane complex, the cytoplasmic secretion ATPase and the periplasm-spanning pseudopilus. Interacts with core component OutG. Cleaved by prepilin peptidase.

The protein resides in the cell inner membrane. Its function is as follows. Component of the type II secretion system required for the energy-dependent secretion of extracellular factors such as proteases and toxins from the periplasm. Plays a role in pseudopilus assembly and seems to control its length. Interacts with the pseudopilus tip complex that is critical for the recognition and binding of secretion substrates. This is Type II secretion system protein K (outK) from Dickeya chrysanthemi (Pectobacterium chrysanthemi).